A 495-amino-acid polypeptide reads, in one-letter code: Protein-serine O-palmitoleoyltransferase porcupine (495 aa).

A run of 8 helical transmembrane segments spans residues 46-66, 92-112, 184-204, 232-252, 358-378, 403-422, 434-454, and 475-495; these read TQYI…VLIV, VIDH…AVQW, TVLS…GPWI, MLIH…FLLT, PFGT…LHGL, LATI…SCTV, VINM…GCIF, and TELN…YFVI. His376 is a catalytic residue.

The protein belongs to the membrane-bound acyltransferase family. Porcupine subfamily.

It is found in the endoplasmic reticulum membrane. The enzyme catalyses [Wnt protein]-L-serine + (9Z)-hexadecenoyl-CoA = [Wnt protein]-O-(9Z)-hexadecenoyl-L-serine + CoA. Functionally, protein-serine O-palmitoleoyltransferase that acts as a key regulator of the Wnt signaling pathway by mediating the attachment of palmitoleate, a 16-carbon monounsaturated fatty acid (C16:1(9Z)), to Wnt proteins. Serine palmitoleoylation of WNT proteins is required for efficient binding to frizzled receptors. In Anopheles gambiae (African malaria mosquito), this protein is Protein-serine O-palmitoleoyltransferase porcupine.